The chain runs to 341 residues: Pyrophosphate--fructose 6-phosphate 1-phosphotransferase (341 aa).

Gly-10 is a diphosphate binding site. Glu-103 contributes to the Mg(2+) binding site. Residues 125–127, Arg-162, 169–171, Glu-221, Arg-265, and 271–274 each bind substrate; these read TID, MGR, and HTQR. Asp-127 serves as the catalytic Proton acceptor.

The protein belongs to the phosphofructokinase type A (PFKA) family. Mixed-substrate PFK group III subfamily. As to quaternary structure, homotetramer. Requires Mg(2+) as cofactor.

It is found in the cytoplasm. It carries out the reaction beta-D-fructose 6-phosphate + diphosphate = beta-D-fructose 1,6-bisphosphate + phosphate + H(+). The protein operates within carbohydrate degradation; glycolysis; D-glyceraldehyde 3-phosphate and glycerone phosphate from D-glucose: step 3/4. Non-allosteric. Functionally, catalyzes the phosphorylation of D-fructose 6-phosphate, the first committing step of glycolysis. Uses inorganic phosphate (PPi) as phosphoryl donor instead of ATP like common ATP-dependent phosphofructokinases (ATP-PFKs), which renders the reaction reversible, and can thus function both in glycolysis and gluconeogenesis. Consistently, PPi-PFK can replace the enzymes of both the forward (ATP-PFK) and reverse (fructose-bisphosphatase (FBPase)) reactions. The protein is Pyrophosphate--fructose 6-phosphate 1-phosphotransferase of Amycolatopsis methanolica.